A 518-amino-acid chain; its full sequence is MYHLNVTPDKQTSPHGCLVVSETDQQRSHVKERVNGTPNQNGGTSTSSKPRSVFENRPPQRLTREAMSKYLRERNDQTLIILHAKVAQKSYGNEKRFLCPPPCLYLMESGWKQKQQILEEADQAPEAGQVHAFIGIGSSDQEMQQLNLDGKNFCTAKTLYISDTDKRKHFMLCVKMFFGSGLEVGAFNSRRIKVISKPSKKKQSLKNADLCIASGTKVALFNRLRSQTVSTRYLHVENGNFHASSIQWGSFAIHLLDDDESESEEFTVRDGYIHYGQTVKLVCSTTGMALPRLIIRKVDKQTAILNADDPVSQLHKCAFYLKDSERMYLCLSQERIIQFQATPCPKEPNKEMINDGASWTIISTDKAEYTFCDGMGPTSKPVTPVPVVHSLQLNGGGDVAMLEVNGENFSPQLKVWFGEVEADTMYRCEEGLLCVVPDISEFREGWTWVKQSVQVPINLVRHDGIIYPTNLTFTFTPEPGPRPTLARLLYISSTPRDRIMPDRVPGRGVLIRPTWTTT.

Residues 22–59 (ETDQQRSHVKERVNGTPNQNGGTSTSSKPRSVFENRPP) are disordered. Positions 24-34 (DQQRSHVKERV) are enriched in basic and acidic residues. Positions 36 to 50 (GTPNQNGGTSTSSKP) are enriched in polar residues. DNA-binding regions lie at residues 89-96 (KSYGNEKR), 223-232 (RLRSQTVSTR), and 296-328 (RKVDKQTAILNADDPVSQLHKCAFYLKDSERMY). The IPT/TIG domain occupies 386–476 (PVVHSLQLNG…YPTNLTFTFT (91 aa)).

This sequence belongs to the Su(H) family. Interacts with activated Notch proteins.

Its subcellular location is the nucleus. Transcriptional regulator that plays a central role in Notch signaling, a signaling pathway involved in cell-cell communication that regulates a broad spectrum of cell-fate determinations. Acts as a transcriptional repressor when it is not associated with Notch proteins. When associated with some Notch protein, it acts as a transcriptional activator that activates transcription of Notch target genes. The chain is Suppressor of hairless homolog (RBP-JK) from Halocynthia roretzi (Sea squirt).